The chain runs to 943 residues: TBC1 domain family member 2B (943 aa).

A disordered region spans residues 1-29 (MPGVEDPCDSQGTPPEEPSTSVAPGEAAK). The segment covering 10 to 22 (SQGTPPEEPSTSV) has biased composition (polar residues). A PH domain is found at 32–129 (SPRLCGYLAK…WLQELQQKRW (98 aa)). The stretch at 315 to 514 (RMESDVLLKL…ARYSNLEAKM (200 aa)) forms a coiled coil. One can recognise a Rab-GAP TBC domain in the interval 642-836 (GIPHEHRSRM…RIWDSLLYEG (195 aa)).

The protein localises to the early endosome. GTPase-activating protein that plays a role in the early steps of endocytosis. This Xenopus tropicalis (Western clawed frog) protein is TBC1 domain family member 2B (tbc1d2b).